The primary structure comprises 81 residues: Serine rich endogenous peptide 21 (81 aa).

Positions 1 to 40 are cleaved as a signal peptide; the sequence is MLELHFEFIDLNQPKMYKFVVCLLTLSFLLLSGLSNTALA. The short motif at 65–79 is the SCOOP motif element; the sequence is KVRVLPSASRRGPGQ. A SxS motif essential for MIK2 binding motif is present at residues 71 to 73; it reads SAS.

Belongs to the serine rich endogenous peptide (SCOOP) phytocytokine family. Interacts with MIK2 (via extracellular leucine-rich repeat domain); this interaction triggers the formation of complex between MIK2 and the BAK1/SERK3 and SERK4 coreceptors, and subsequent BAK1 activation by phosphorylation.

Its subcellular location is the cell membrane. It localises to the secreted. The protein localises to the extracellular space. The protein resides in the apoplast. In terms of biological role, brassicaceae-specific phytocytokine (plant endogenous peptide released into the apoplast) perceived by MIK2 in a BAK1/SERK3 and SERK4 coreceptors-dependent manner, that modulates various physiological and antimicrobial processes including growth prevention and reactive oxygen species (ROS) response regulation. In Arabidopsis thaliana (Mouse-ear cress), this protein is Serine rich endogenous peptide 21.